The following is a 136-amino-acid chain: Membrane-bound negative regulator YvrL (136 aa).

The next 4 membrane-spanning stretches (helical) occupy residues L18 to L38, A46 to F66, L83 to T103, and L106 to I126.

Its subcellular location is the cell membrane. Functionally, negatively regulates RNA polymerase sigma factor SigO-dependent transcription. Prevents the expression or secretion of OxdC under nonstress conditions. May act as an anti-sigma factor. The protein is Membrane-bound negative regulator YvrL (yvrL) of Bacillus subtilis (strain 168).